A 207-amino-acid chain; its full sequence is Small ribosomal subunit protein uS4c (207 aa).

Residues 92–155 (MRLDNILFRL…TYQSILSKRI (64 aa)) form the S4 RNA-binding domain.

The protein belongs to the universal ribosomal protein uS4 family. In terms of assembly, part of the 30S ribosomal subunit. Contacts protein S5. The interaction surface between S4 and S5 is involved in control of translational fidelity.

It localises to the plastid. Its subcellular location is the chloroplast. Its function is as follows. One of the primary rRNA binding proteins, it binds directly to 16S rRNA where it nucleates assembly of the body of the 30S subunit. In terms of biological role, with S5 and S12 plays an important role in translational accuracy. The sequence is that of Small ribosomal subunit protein uS4c (rps4) from Equisetum scirpoides (Dwarf-scouring rush).